Here is a 194-residue protein sequence, read N- to C-terminus: Ribonuclease HII (194 aa).

Residues 16–194 (CIVAGIDEAG…PYHRRSFRCC (179 aa)) enclose the RNase H type-2 domain. A divalent metal cation-binding residues include Asp22, Glu23, and Asp113.

This sequence belongs to the RNase HII family. Mn(2+) is required as a cofactor. The cofactor is Mg(2+).

The protein resides in the cytoplasm. The enzyme catalyses Endonucleolytic cleavage to 5'-phosphomonoester.. Endonuclease that specifically degrades the RNA of RNA-DNA hybrids. This Rickettsia massiliae (strain Mtu5) protein is Ribonuclease HII.